The chain runs to 407 residues: BMP-like protein unc-129 (407 aa).

The signal sequence occupies residues 1 to 18; that stretch reads MRRLPIVLLLSVFSIANC. Residues Asn27, Asn42, and Asn211 are each glycosylated (N-linked (GlcNAc...) asparagine). The interval 252-283 is disordered; sequence DDREPIKRKNGKKNSLSEEISSEDVWQGFGEE. Asn395 is a glycosylation site (N-linked (GlcNAc...) asparagine).

The protein belongs to the TGF-beta family. In terms of assembly, interacts with netrin receptor unc-5; the interaction is direct.

The protein resides in the secreted. It localises to the extracellular space. In terms of biological role, required for the migration of axonal growth-cones and distal tip cells (DTC) along the dorsal-ventral axis of the body wall. Acts cell nonautonomously and independently of the classical daf-4, sma-6 or daf-1 TGFbeta receptor signaling. During axon migration, facilitates long-range repulsive guidance of unc-6/netrin by enhancing unc-5-unc-40 signaling at the expense of unc-5 alone signaling, probably through direct interaction with receptor unc-5. Involved in cell-cell contact formation in sensory rays in the developing male tail, via a pathway involving plx-2 and mab-20/semaphorin-2A. The protein is BMP-like protein unc-129 of Caenorhabditis elegans.